Here is a 182-residue protein sequence, read N- to C-terminus: Trypsin inhibitor 2 (182 aa).

A Pyrrolidone carboxylic acid modification is found at Q1. Intrachain disulfides connect C40/C84 and C136/C147.

This sequence belongs to the protease inhibitor I3 (leguminous Kunitz-type inhibitor) family.

The protein is Trypsin inhibitor 2 of Psophocarpus tetragonolobus (Winged bean).